A 198-amino-acid polypeptide reads, in one-letter code: Small ribosomal subunit protein uS7 (198 aa).

The protein belongs to the universal ribosomal protein uS7 family. Part of the 30S ribosomal subunit.

One of the primary rRNA binding proteins, it binds directly to 16S rRNA where it nucleates assembly of the head domain of the 30S subunit. Is located at the subunit interface close to the decoding center. The chain is Small ribosomal subunit protein uS7 from Desulfurococcus mucosus (Desulfurococcus mobilis).